The chain runs to 549 residues: Pleckstrin homology domain-containing family A member 8 (549 aa).

One can recognise a PH domain in the interval 1 to 93 (MEGVLYKWTN…WLVALGTAKA (93 aa)). Disordered stretches follow at residues 180-245 (NPDL…ENIS) and 257-312 (QNDL…QEVQ). Basic and acidic residues predominate over residues 203–219 (KSNDPKNLHPGETRKDL). Positions 276 to 288 (EPVEEQQTDGSTE) are enriched in acidic residues. Residues 299–309 (EVSMSPTQNKQ) are compositionally biased toward polar residues.

It is found in the cytoplasm. The protein resides in the golgi apparatus. The protein localises to the trans-Golgi network membrane. Its subcellular location is the membrane. Functionally, cargo transport protein that is required for apical transport from the trans-Golgi network (TGN) to the plasma membrane. The chain is Pleckstrin homology domain-containing family A member 8 (plekha8) from Danio rerio (Zebrafish).